A 445-amino-acid chain; its full sequence is Argininosuccinate synthase (445 aa).

ATP is bound by residues 17–25 (AFSGGLDTS) and Ala-43. Residue Tyr-99 participates in L-citrulline binding. Residues Gly-129 and Thr-131 each contribute to the ATP site. L-aspartate is bound by residues Thr-131, Asn-135, and Asp-136. Residue Asn-135 participates in L-citrulline binding. Asp-136 is an ATP binding site. L-citrulline contacts are provided by Arg-139 and Ser-192. Asp-194 provides a ligand contact to ATP. Positions 201, 203, and 280 each coordinate L-citrulline.

This sequence belongs to the argininosuccinate synthase family. Type 2 subfamily. Homotetramer.

Its subcellular location is the cytoplasm. The catalysed reaction is L-citrulline + L-aspartate + ATP = 2-(N(omega)-L-arginino)succinate + AMP + diphosphate + H(+). It functions in the pathway amino-acid biosynthesis; L-arginine biosynthesis; L-arginine from L-ornithine and carbamoyl phosphate: step 2/3. In Rhodopseudomonas palustris (strain BisA53), this protein is Argininosuccinate synthase.